The primary structure comprises 528 residues: Bifunctional purine biosynthesis protein PurH (528 aa).

Residues 2–149 form the MGS-like domain; that stretch reads TDLAPLRRAL…KNHGFVSVVV (148 aa).

The protein belongs to the PurH family.

The catalysed reaction is (6R)-10-formyltetrahydrofolate + 5-amino-1-(5-phospho-beta-D-ribosyl)imidazole-4-carboxamide = 5-formamido-1-(5-phospho-D-ribosyl)imidazole-4-carboxamide + (6S)-5,6,7,8-tetrahydrofolate. It carries out the reaction IMP + H2O = 5-formamido-1-(5-phospho-D-ribosyl)imidazole-4-carboxamide. It functions in the pathway purine metabolism; IMP biosynthesis via de novo pathway; 5-formamido-1-(5-phospho-D-ribosyl)imidazole-4-carboxamide from 5-amino-1-(5-phospho-D-ribosyl)imidazole-4-carboxamide (10-formyl THF route): step 1/1. It participates in purine metabolism; IMP biosynthesis via de novo pathway; IMP from 5-formamido-1-(5-phospho-D-ribosyl)imidazole-4-carboxamide: step 1/1. The sequence is that of Bifunctional purine biosynthesis protein PurH from Roseobacter denitrificans (strain ATCC 33942 / OCh 114) (Erythrobacter sp. (strain OCh 114)).